A 247-amino-acid chain; its full sequence is Protein LIFEGUARD 4 (247 aa).

7 helical membrane passes run 42–62, 75–95, 105–125, 130–150, 165–185, 188–208, and 222–242; these read VYSIIAFQLLATIAVASTVVF, AGLALWIVLIITPLIVMCPLY, YLLLGIFTVALAFAVGLTCAF, VILEAAILTTVVVLSLTVYTF, FLFGALIVLMVFALIQIFFPL, ISVMIYGCLAAIIFCGYIVYD, and IWAAVSLYLDIINLFLALLTI.

Belongs to the BI1 family.

The protein resides in the membrane. The protein is Protein LIFEGUARD 4 of Arabidopsis thaliana (Mouse-ear cress).